Consider the following 123-residue polypeptide: UPF0102 protein Fjoh_1217 (123 aa).

This sequence belongs to the UPF0102 family.

This is UPF0102 protein Fjoh_1217 from Flavobacterium johnsoniae (strain ATCC 17061 / DSM 2064 / JCM 8514 / BCRC 14874 / CCUG 350202 / NBRC 14942 / NCIMB 11054 / UW101) (Cytophaga johnsonae).